We begin with the raw amino-acid sequence, 356 residues long: 5-formaminoimidazole-4-carboxamide-1-(beta)-D-ribofuranosyl 5'-monophosphate synthetase 2 (356 aa).

Positions 27 and 94 each coordinate 5-amino-1-(5-phospho-beta-D-ribosyl)imidazole-4-carboxamide. Residues 101–333 (RENFTGMAVP…YSDLMQKRLS (233 aa)) form the ATP-grasp domain. Residues 145–196 (PHDI…TRYD) and Glu226 each bind ATP. Residue Asn255 coordinates 5-amino-1-(5-phospho-beta-D-ribosyl)imidazole-4-carboxamide. Residues Glu293 and Glu306 each coordinate Mg(2+).

It belongs to the phosphohexose mutase family. The cofactor is Mg(2+). Mn(2+) is required as a cofactor.

The catalysed reaction is 5-amino-1-(5-phospho-beta-D-ribosyl)imidazole-4-carboxamide + formate + ATP = 5-formamido-1-(5-phospho-D-ribosyl)imidazole-4-carboxamide + ADP + phosphate. The protein operates within purine metabolism; IMP biosynthesis via de novo pathway; 5-formamido-1-(5-phospho-D-ribosyl)imidazole-4-carboxamide from 5-amino-1-(5-phospho-D-ribosyl)imidazole-4-carboxamide (formate route): step 1/1. Catalyzes the ATP- and formate-dependent formylation of 5-aminoimidazole-4-carboxamide-1-beta-d-ribofuranosyl 5'-monophosphate (AICAR) to 5-formaminoimidazole-4-carboxamide-1-beta-d-ribofuranosyl 5'-monophosphate (FAICAR) in the absence of folates. This is 5-formaminoimidazole-4-carboxamide-1-(beta)-D-ribofuranosyl 5'-monophosphate synthetase 2 from Methanosarcina mazei (strain ATCC BAA-159 / DSM 3647 / Goe1 / Go1 / JCM 11833 / OCM 88) (Methanosarcina frisia).